A 572-amino-acid polypeptide reads, in one-letter code: Na(+)/citrate cotransporter (572 aa).

The next 8 membrane-spanning stretches (helical) occupy residues 13–33 (SFVILFFAPILLLPLIILVPD), 53–73 (VIPVAITSLLPVLLFPLLKVL), 80–100 (VQYMTDTNMLFLGSLIVATAV), 124–144 (LMLGFMFVTAFLSMWISNTAT), 218–238 (AASIGGTATLTGTGPNVVLLG), 255–275 (SWFAFALPNMLLMLVMAWLWL), 315–335 (PLSYAECNVLFCFGLLIILWF), and 357–377 (HVTDATVAIFVAILLFIVPSQ). An N-linked (GlcNAc...) asparagine glycan is attached at asparagine 382. Helical transmembrane passes span 410–430 (VPWGIVLLLGGGFAMAKGCET), 443–463 (PLSSVRPAIITLILSCIVAMT), 491–511 (PLYVMIPCTLSASLAFMLPVA), and 532–552 (TGLVMNILGIASVFLSVNTWG). Residue asparagine 566 is glycosylated (N-linked (GlcNAc...) asparagine).

This sequence belongs to the SLC13A/DASS transporter (TC 2.A.47) family. NADC subfamily. Homodimer. Expressed in liver, testis and brain.

The protein localises to the cell membrane. It catalyses the reaction citrate(out) + 4 Na(+)(out) = citrate(in) + 4 Na(+)(in). With respect to regulation, inhibited by Li(+). In terms of biological role, high-affinity sodium/citrate cotransporter that mediates citrate entry into cells, which is a critical participant of biochemical pathways. May function in various metabolic processes in which citrate has a critical role such as energy production (Krebs cycle), fatty acid synthesis, cholesterol synthesis, glycolysis, and gluconeogenesis. Transports citrate into the cell in a Na(+)-dependent manner, recognizing the trivalent form of citrate (physiological pH) rather than the divalent form. Can recognize succinate as a substrate, but its affinity for succinate is several fold lower than for citrate. The stoichiometry is probably 4 Na(+) for each carboxylate, irrespective of whether the translocated substrate is divalent or trivalent, rendering the process electrogenic. Involved in the regulation of citrate levels in the brain. The polypeptide is Na(+)/citrate cotransporter (Slc13a5) (Rattus norvegicus (Rat)).